The following is a 512-amino-acid chain: Histidine ammonia-lyase (512 aa).

Positions 142 to 144 (ASG) form a cross-link, 5-imidazolinone (Ala-Gly). The residue at position 143 (serine 143) is a 2,3-didehydroalanine (Ser).

It belongs to the PAL/histidase family. In terms of processing, contains an active site 4-methylidene-imidazol-5-one (MIO), which is formed autocatalytically by cyclization and dehydration of residues Ala-Ser-Gly.

It is found in the cytoplasm. It carries out the reaction L-histidine = trans-urocanate + NH4(+). The protein operates within amino-acid degradation; L-histidine degradation into L-glutamate; N-formimidoyl-L-glutamate from L-histidine: step 1/3. In Bartonella henselae (strain ATCC 49882 / DSM 28221 / CCUG 30454 / Houston 1) (Rochalimaea henselae), this protein is Histidine ammonia-lyase.